Here is a 186-residue protein sequence, read N- to C-terminus: Potassium-transporting ATPase KdpC subunit (186 aa).

The helical transmembrane segment at 10 to 30 threads the bilayer; the sequence is LTIITMVLCGFLFPLAITLIG.

Belongs to the KdpC family. The system is composed of three essential subunits: KdpA, KdpB and KdpC.

The protein localises to the cell membrane. Its function is as follows. Part of the high-affinity ATP-driven potassium transport (or Kdp) system, which catalyzes the hydrolysis of ATP coupled with the electrogenic transport of potassium into the cytoplasm. This subunit acts as a catalytic chaperone that increases the ATP-binding affinity of the ATP-hydrolyzing subunit KdpB by the formation of a transient KdpB/KdpC/ATP ternary complex. The protein is Potassium-transporting ATPase KdpC subunit of Staphylococcus aureus (strain MRSA252).